The sequence spans 555 residues: Probable metabolite transport protein YDR387C (555 aa).

Residues 1–39 are Cytoplasmic-facing; that stretch reads MSTDESEDVYSDLYSIISQVTSNTANDIEQLPYALTFKT. The chain crosses the membrane as a helical span at residues 40–60; the sequence is SLIFVGATIGGLLFGYDTGVI. At 61 to 83 the chain is on the extracellular side; sequence SGVLLSLKPEDLSLVVLTDVQKE. The helical transmembrane segment at 84–104 threads the bilayer; the sequence is LITSSTSVGSFFGSILAFPLA. The Cytoplasmic segment spans residues 105–118; it reads DRYGRRITLAICCS. Residues 119 to 139 traverse the membrane as a helical segment; that stretch reads IFILAAIGMAIARTLTFLICG. Position 140 (R140) is a topological domain, extracellular. The helical transmembrane segment at 141 to 161 threads the bilayer; it reads LLVGIAVGVSAQCVPLFLSEI. At 162–168 the chain is on the cytoplasmic side; it reads SPSRIRG. A helical membrane pass occupies residues 169 to 189; sequence FMLTLNIIAITGGQLVSYVIA. Residues 190-200 are Extracellular-facing; it reads SLMKEIDNSWR. The chain crosses the membrane as a helical span at residues 201-221; sequence YLFALSAIPAILFLSILDFIP. At 222–356 the chain is on the cytoplasmic side; it reads ESPRWSISKG…TIRALIVGCM (135 aa). Residues 289–313 are disordered; sequence SSTSGTLSPPNIKRLSSNTERTSNT. A helical membrane pass occupies residues 357–377; sequence LMFFQQITGFNAFMYYAAIIF. Topologically, residues 378–384 are extracellular; the sequence is SKFNIKN. A helical membrane pass occupies residues 385 to 405; sequence PLLPPILIASTNFIFTFFAMY. The Cytoplasmic segment spans residues 406–413; that stretch reads TMDSLGRR. Residues 414-434 traverse the membrane as a helical segment; it reads AILLRTILIMTVGLLLCSVGF. At 435 to 440 the chain is on the extracellular side; it reads GHDQVN. The helical transmembrane segment at 441 to 461 threads the bilayer; the sequence is LLLISVVIYVAAYASAMGSVP. The Cytoplasmic segment spans residues 462–474; the sequence is WTCVEFLPLNRRS. Residues 475-497 traverse the membrane as a helical segment; it reads FGASCIACTNWLTNAFVSMTYLS. Residues 498 to 506 lie on the Extracellular side of the membrane; sequence TINTIGDEN. Residues 507 to 527 traverse the membrane as a helical segment; that stretch reads TMLIFAFFTVCAWFFVYFWYP. Residues 528–555 are Cytoplasmic-facing; sequence EVKGLSLEEVGRVFDNGIDVHYVFRTYH.

It belongs to the major facilitator superfamily. Sugar transporter (TC 2.A.1.1) family.

It localises to the membrane. This is Probable metabolite transport protein YDR387C from Saccharomyces cerevisiae (strain ATCC 204508 / S288c) (Baker's yeast).